Consider the following 88-residue polypeptide: Small ribosomal subunit protein bS20 (88 aa).

It belongs to the bacterial ribosomal protein bS20 family.

Functionally, binds directly to 16S ribosomal RNA. This is Small ribosomal subunit protein bS20 from Clostridium kluyveri (strain NBRC 12016).